The chain runs to 140 residues: Ribosome-binding factor A (140 aa).

The disordered stretch occupies residues 121 to 140; it reads KAAEHGREDEELDDTEQDDK. The span at 129–140 shows a compositional bias: acidic residues; it reads DEELDDTEQDDK.

This sequence belongs to the RbfA family. Monomer. Binds 30S ribosomal subunits, but not 50S ribosomal subunits or 70S ribosomes.

It localises to the cytoplasm. One of several proteins that assist in the late maturation steps of the functional core of the 30S ribosomal subunit. Associates with free 30S ribosomal subunits (but not with 30S subunits that are part of 70S ribosomes or polysomes). Required for efficient processing of 16S rRNA. May interact with the 5'-terminal helix region of 16S rRNA. The sequence is that of Ribosome-binding factor A from Shewanella loihica (strain ATCC BAA-1088 / PV-4).